The following is a 212-amino-acid chain: HTH-type transcriptional regulator RutR (212 aa).

Positions 17–77 (SAKKKAILSA…AVLRQILDIW (61 aa)) constitute an HTH tetR-type domain. The H-T-H motif DNA-binding region spans 39 to 58 (TRLEQIAELAGVSKTNLLYY).

In terms of assembly, homodimer.

In terms of biological role, master transcription regulator which represses the degradation of pyrimidines (rutABCDEFG) and purines (gcl operon) for maintenance of metabolic balance between pyrimidines and purines. It also regulates the synthesis of pyrimidine nucleotides and arginine from glutamine (carAB) and the supply of glutamate (gadABWX). In Escherichia coli O6:H1 (strain CFT073 / ATCC 700928 / UPEC), this protein is HTH-type transcriptional regulator RutR (rutR).